Consider the following 103-residue polypeptide: Co-chaperonin GroES (103 aa).

It belongs to the GroES chaperonin family. Heptamer of 7 subunits arranged in a ring. Interacts with the chaperonin GroEL.

The protein localises to the cytoplasm. In terms of biological role, together with the chaperonin GroEL, plays an essential role in assisting protein folding. The GroEL-GroES system forms a nano-cage that allows encapsulation of the non-native substrate proteins and provides a physical environment optimized to promote and accelerate protein folding. GroES binds to the apical surface of the GroEL ring, thereby capping the opening of the GroEL channel. This Trichodesmium erythraeum (strain IMS101) protein is Co-chaperonin GroES.